We begin with the raw amino-acid sequence, 74 residues long: Protein SlyX homolog (74 aa).

This sequence belongs to the SlyX family.

This Aliivibrio salmonicida (strain LFI1238) (Vibrio salmonicida (strain LFI1238)) protein is Protein SlyX homolog.